The sequence spans 283 residues: Protein-L-isoaspartate O-methyltransferase (283 aa).

Ser-122 is a catalytic residue.

This sequence belongs to the methyltransferase superfamily. L-isoaspartyl/D-aspartyl protein methyltransferase family.

It localises to the cytoplasm. It catalyses the reaction [protein]-L-isoaspartate + S-adenosyl-L-methionine = [protein]-L-isoaspartate alpha-methyl ester + S-adenosyl-L-homocysteine. Functionally, catalyzes the methyl esterification of L-isoaspartyl residues in peptides and proteins that result from spontaneous decomposition of normal L-aspartyl and L-asparaginyl residues. It plays a role in the repair and/or degradation of damaged proteins. In Leptothrix cholodnii (strain ATCC 51168 / LMG 8142 / SP-6) (Leptothrix discophora (strain SP-6)), this protein is Protein-L-isoaspartate O-methyltransferase.